Consider the following 421-residue polypeptide: UDP-N-acetylglucosamine 1-carboxyvinyltransferase (421 aa).

22–23 is a phosphoenolpyruvate binding site; it reads KN. Arg-93 contacts UDP-N-acetyl-alpha-D-glucosamine. Cys-117 serves as the catalytic Proton donor. Cys-117 is modified (2-(S-cysteinyl)pyruvic acid O-phosphothioketal). Residues 122 to 126, Asp-308, and Leu-330 each bind UDP-N-acetyl-alpha-D-glucosamine; that span reads RPVDL.

This sequence belongs to the EPSP synthase family. MurA subfamily.

It localises to the cytoplasm. It carries out the reaction phosphoenolpyruvate + UDP-N-acetyl-alpha-D-glucosamine = UDP-N-acetyl-3-O-(1-carboxyvinyl)-alpha-D-glucosamine + phosphate. Its pathway is cell wall biogenesis; peptidoglycan biosynthesis. Its function is as follows. Cell wall formation. Adds enolpyruvyl to UDP-N-acetylglucosamine. The protein is UDP-N-acetylglucosamine 1-carboxyvinyltransferase of Helicobacter hepaticus (strain ATCC 51449 / 3B1).